The following is a 323-amino-acid chain: Delta(7)-sterol 5(6)-desaturase ERG3B (323 aa).

A run of 3 helical transmembrane segments spans residues Ala-67–Leu-87, Ile-112–Gly-132, and Ser-150–Ile-170. A Fatty acid hydroxylase domain is found at Ile-157–Gly-285. The short motif at His-171–His-175 is the Histidine box-1 element. Residues His-184–His-188 carry the Histidine box-2 motif. The Histidine box-3 signature appears at His-262–His-266.

It belongs to the sterol desaturase family.

It localises to the endoplasmic reticulum membrane. The catalysed reaction is episterol + 2 Fe(II)-[cytochrome b5] + O2 + 2 H(+) = 5-dehydroepisterol + 2 Fe(III)-[cytochrome b5] + 2 H2O. It participates in steroid metabolism; ergosterol biosynthesis. Its function is as follows. C-5 sterol desaturase; part of the third module of ergosterol biosynthesis pathway that includes the late steps of the pathway. ERG3A and ERG3BB catalyze the introduction of a C-5 double bond in the B ring to produce 5-dehydroepisterol. The third module or late pathway involves the ergosterol synthesis itself through consecutive reactions that mainly occur in the endoplasmic reticulum (ER) membrane. Firstly, the squalene synthase ERG9 catalyzes the condensation of 2 farnesyl pyrophosphate moieties to form squalene, which is the precursor of all steroids. Squalene synthase is crucial for balancing the incorporation of farnesyl diphosphate (FPP) into sterol and nonsterol isoprene synthesis. Secondly, squalene is converted into lanosterol by the consecutive action of the squalene epoxidase ERG1 and the lanosterol synthase ERG7. Then, the delta(24)-sterol C-methyltransferase ERG6 methylates lanosterol at C-24 to produce eburicol. Eburicol is the substrate of the sterol 14-alpha demethylase encoded by CYP51A, CYP51B and CYP51C, to yield 4,4,24-trimethyl ergosta-8,14,24(28)-trienol. CYP51B encodes the enzyme primarily responsible for sterol 14-alpha-demethylation, and plays an essential role in ascospore formation. CYP51A encodes an additional sterol 14-alpha-demethylase, induced on ergosterol depletion and responsible for the intrinsic variation in azole sensitivity. The third CYP51 isoform, CYP51C, does not encode a sterol 14-alpha-demethylase, but is required for full virulence on host wheat ears. The C-14 reductase ERG24 then reduces the C14=C15 double bond which leads to 4,4-dimethylfecosterol. A sequence of further demethylations at C-4, involving the C-4 demethylation complex containing the C-4 methylsterol oxidases ERG25, the sterol-4-alpha-carboxylate 3-dehydrogenase ERG26 and the 3-keto-steroid reductase ERG27, leads to the production of fecosterol via 4-methylfecosterol. ERG28 has a role as a scaffold to help anchor ERG25, ERG26 and ERG27 to the endoplasmic reticulum. The C-8 sterol isomerase ERG2 then catalyzes the reaction which results in unsaturation at C-7 in the B ring of sterols and thus converts fecosterol to episterol. The sterol-C5-desaturases ERG3A and ERG3BB then catalyze the introduction of a C-5 double bond in the B ring to produce 5-dehydroepisterol. The C-22 sterol desaturases ERG5A and ERG5B further convert 5-dehydroepisterol into ergosta-5,7,22,24(28)-tetraen-3beta-ol by forming the C-22(23) double bond in the sterol side chain. Finally, ergosta-5,7,22,24(28)-tetraen-3beta-ol is substrate of the C-24(28) sterol reductase ERG4 to produce ergosterol. The chain is Delta(7)-sterol 5(6)-desaturase ERG3B from Gibberella zeae (strain ATCC MYA-4620 / CBS 123657 / FGSC 9075 / NRRL 31084 / PH-1) (Wheat head blight fungus).